A 367-amino-acid polypeptide reads, in one-letter code: Peptide chain release factor 2 (367 aa).

Residue Gln254 is modified to N5-methylglutamine.

Belongs to the prokaryotic/mitochondrial release factor family. In terms of processing, methylated by PrmC. Methylation increases the termination efficiency of RF2.

The protein resides in the cytoplasm. Peptide chain release factor 2 directs the termination of translation in response to the peptide chain termination codons UGA and UAA. This chain is Peptide chain release factor 2, found in Neisseria meningitidis serogroup C / serotype 2a (strain ATCC 700532 / DSM 15464 / FAM18).